The primary structure comprises 329 residues: Mas-related G-protein coupled receptor member X2 (329 aa).

At 1-33 (MDPTTPAWGTESTTMDGNDQSLPLLCDKEALIP) the chain is on the extracellular side. The helical transmembrane segment at 34–54 (VFLILFIALVGLVGNGFVLWL) threads the bilayer. Residues 55–63 (LGFRMSRNA) lie on the Cytoplasmic side of the membrane. The helical transmembrane segment at 64–84 (FSVYVLSLAGADFLFLCFQII) threads the bilayer. Residues 85–96 (NCLVYLRDFFCS) are Extracellular-facing. Residues 97–117 (ISINFPSXFTTVMTCAYLAGL) traverse the membrane as a helical segment. Over 118-144 (SMLSTISTERCLSVLWPIWYRCRRPRH) the chain is Cytoplasmic. Residues 145–165 (LSAVVCVLLWALSLLLSILEG) form a helical membrane-spanning segment. At 166 to 184 (KFCGFLFSDGDFGWCQIFD) the chain is on the extracellular side. Residues 185 to 205 (FITAAWLIFLFVVLCASSLAL) traverse the membrane as a helical segment. Over 206-228 (LVRILCGSRGLPLTRLYLTILLT) the chain is Cytoplasmic. Residues 229 to 249 (VLVFLLCGLPFGIQWFLILGF) traverse the membrane as a helical segment. Residues 250–263 (WNSDVLLCHIHLVS) lie on the Extracellular side of the membrane. The helical transmembrane segment at 264–284 (VVLSSLNSSANPIIYFFVGSF) threads the bilayer. Topologically, residues 285–329 (RKQWRLQQPILKLAFQRALQDTAEVDHSEGCFPQGTSEMSRSSLV) are cytoplasmic.

Belongs to the G-protein coupled receptor 1 family. Mas subfamily.

It localises to the cell membrane. In terms of biological role, mast cell-specific receptor for basic secretagogues, i.e. cationic amphiphilic drugs, as well as endo- or exogenous peptides, consisting of a basic head group and a hydrophobic core. Recognizes and binds small molecules containing a cyclized tetrahydroisoquinoline (THIQ), such as non-steroidal neuromuscular blocking drugs (NMBDs), including tubocurarine and atracurium. In response to these compounds, mediates pseudo-allergic reactions characterized by histamine release, inflammation and airway contraction. The polypeptide is Mas-related G-protein coupled receptor member X2 (MRGPRX2) (Hoolock hoolock (Western hoolock gibbon)).